Reading from the N-terminus, the 34-residue chain is MSDIN-like toxin proprotein 7 (34 aa).

Residues 1-10 (MSDINATRLP) constitute a propeptide that is removed on maturation. Positions 11–17 (AWLTDCP) form a cross-link, cyclopeptide (Ala-Pro). Residues 18 to 34 (CVGDDVNRLLTRGESLC) constitute a propeptide that is removed on maturation.

This sequence belongs to the MSDIN fungal toxin family. In terms of processing, processed by the macrocyclase-peptidase enzyme POPB to yield a toxic cyclic heptapeptide. POPB first removes 10 residues from the N-terminus. Conformational trapping of the remaining peptide forces the enzyme to release this intermediate rather than proceed to macrocyclization. The enzyme rebinds the remaining peptide in a different conformation and catalyzes macrocyclization of the N-terminal 7 residues. In terms of tissue distribution, expressed in basidiocarps.

Probable toxin that belongs to the MSDIN-like toxin family responsible for a large number of food poisoning cases and deaths. The protein is MSDIN-like toxin proprotein 7 of Amanita exitialis (Guangzhou destroying angel).